The primary structure comprises 119 residues: Large ribosomal subunit protein bL20c (119 aa).

It belongs to the bacterial ribosomal protein bL20 family.

The protein resides in the plastid. Its subcellular location is the chloroplast. Its function is as follows. Binds directly to 23S ribosomal RNA and is necessary for the in vitro assembly process of the 50S ribosomal subunit. It is not involved in the protein synthesizing functions of that subunit. This is Large ribosomal subunit protein bL20c from Brachypodium distachyon (Purple false brome).